The primary structure comprises 92 residues: Integration host factor subunit beta (92 aa).

Belongs to the bacterial histone-like protein family. As to quaternary structure, heterodimer of an alpha and a beta chain.

In terms of biological role, this protein is one of the two subunits of integration host factor, a specific DNA-binding protein that functions in genetic recombination as well as in transcriptional and translational control. The polypeptide is Integration host factor subunit beta (Bartonella tribocorum (strain CIP 105476 / IBS 506)).